We begin with the raw amino-acid sequence, 423 residues long: F-box/LRR-repeat protein 2 (423 aa).

One can recognise an F-box domain in the interval 9-55 (GLINKKLPKELLLRIFSFLDIVTLCRCAQISKAWNILALDGSNWQRV). 13 LRR repeats span residues 61–87 (QTDV…SLRG), 88–113 (CIGV…NLNG), 114–139 (CTKI…DLTS), 140–165 (CVSV…NLSW), 166–191 (CDQI…LLRG), 192–217 (CTQL…NLQS), 218–243 (CSRI…CLSG), 244–269 (CSNL…EAAR), 270–295 (CSHL…DLEE), 296–321 (CVLI…SLSH), 322–350 (CELI…ELDN), 351–375 (CLLV…ELYD), and 376–401 (CQQV…AYFA). The segment at 80-90 (LRKLSLRGCIG) is interaction with Calmodulin. Residue lysine 201 forms a Glycyl lysine isopeptide (Lys-Gly) (interchain with G-Cter in ubiquitin) linkage. At threonine 404 the chain carries Phosphothreonine; by GSK3-beta. The S-geranylgeranyl cysteine moiety is linked to residue cysteine 420. The CAAX motif signature appears at 420–423 (CVIL).

Part of the SCF (SKP1-CUL1-F-box) E3 ubiquitin-protein ligase complex SCF(FBXL2) composed of CUL1, SKP1, RBX1 and FBXL2. Interacts with calmodulin; may antagonize substrate ubiquitination by SCF(FBXL2). May interact with PIK3R1. Interacts with PTPN13. Phosphorylated by GSK-beta (GSK3B), promoting recognition by FBXO3, leading to its ubiquitination by the SCF(FBXO3) complex. Post-translationally, ubiquitinated at Lys-201 by the SCF(FBXO3) complex in response to lipopolysaccharide (LPS), leading to its degradation by the proteasome.

The protein resides in the membrane. It participates in protein modification; protein ubiquitination. Calcium-activated substrate recognition component of the SCF (SKP1-cullin-F-box protein) E3 ubiquitin-protein ligase complex, SCF(FBXL2), which mediates the ubiquitination and subsequent proteasomal degradation of target proteins. Unlike many F-box proteins, FBXL2 does not seem to target phosphodegron within its substrates but rather calmodulin-binding motifs and is thereby antagonized by calmodulin. This is the case for the cyclins CCND2 and CCND3 which polyubiquitination and subsequent degradation are inhibited by calmodulin. Through CCND2 and CCND3 degradation induces cell-cycle arrest in G(0). SCF(FBXL2) also mediates PIK3R2 ubiquitination and proteasomal degradation thereby regulating phosphatidylinositol 3-kinase signaling and autophagy. PCYT1A monoubiquitination by SCF(FBXL2) and subsequent degradation regulates synthesis of phosphatidylcholine, which is utilized for formation of membranes and of pulmonary surfactant. The SCF(FBXL2) complex acts as a regulator of inflammation by mediating ubiquitination and degradation of TRAF proteins (TRAF1, TRAF2, TRAF3, TRAF4, TRAF5 and TRAF6). The SCF(FBXL2) complex acts as a negative regulator of the NLRP3 inflammasome by mediating ubiquitination and degradation of NLRP3. This is F-box/LRR-repeat protein 2 from Mus musculus (Mouse).